The primary structure comprises 1939 residues: Myosin-1 (1939 aa).

In terms of domain architecture, Myosin N-terminal SH3-like spans 33 to 82 (DAKTSVFVAEPKESFVKGTVQSREGGKVTVKTEAGATLTVKEDQVFPMNP). 2 positions are modified to phosphothreonine: T64 and T69. The 697-residue stretch at 86 to 782 (DKIEDMAMMT…LLGLLEEMRD (697 aa)) folds into the Myosin motor domain. K130 is subject to N6,N6,N6-trimethyllysine. 179 to 186 (GESGAGKT) contributes to the ATP binding site. Phosphotyrosine is present on Y389. T419 carries the phosphothreonine modification. Y424 is subject to Phosphotyrosine. The interval 659-681 (LNKLMTNLRSTHPHFVRCIIPNE) is actin-binding. H757 bears the Pros-methylhistidine mark. The segment at 761–775 (KFGHTKVFFKAGLLG) is actin-binding. Positions 785–814 (LAQLITRTQARCRGFLARVEYQKMVERRES) constitute an IQ domain. Residues 843–1939 (LLKSAETEKE…EVHTKIISEE (1097 aa)) are a coiled coil. A phosphoserine mark is found at S1092 and S1096. 2 disordered regions span residues 1125-1147 (EIEA…SREL) and 1153-1172 (RLEE…KKRE). The span at 1128-1147 (AERASRAKAEKQRSDLSREL) shows a compositional bias: basic and acidic residues. Residues S1162 and S1237 each carry the phosphoserine modification. T1241 carries the phosphothreonine modification. A Phosphoserine modification is found at S1243. Position 1255 is a phosphothreonine (T1255). Phosphoserine is present on S1261. Phosphothreonine is present on residues T1265 and T1286. S1288, S1292, S1303, and S1306 each carry phosphoserine. A Phosphotyrosine modification is found at Y1464. T1467 carries the post-translational modification Phosphothreonine. Position 1474 is a phosphoserine (S1474). The residue at position 1492 (Y1492) is a Phosphotyrosine. S1495 is subject to Phosphoserine. Residue T1501 is modified to Phosphothreonine. S1514 carries the phosphoserine modification. Residue T1517 is modified to Phosphothreonine. Residues S1542, S1554, S1574, S1600, S1603, S1714, and S1726 each carry the phosphoserine modification. Phosphothreonine occurs at positions 1730 and 1736. Residue S1739 is modified to Phosphoserine.

This sequence belongs to the TRAFAC class myosin-kinesin ATPase superfamily. Myosin family. Muscle myosin is a hexameric protein that consists of 2 heavy chain subunits (MHC), 2 alkali light chain subunits (MLC) and 2 regulatory light chain subunits (MLC-2). Interacts with SLC26A5.

The protein resides in the cytoplasm. It localises to the myofibril. Required for normal hearing. It plays a role in cochlear amplification of auditory stimuli, likely through the positive regulation of prestin (SLC26A5) activity and outer hair cell (OHC) electromotility. This chain is Myosin-1 (MYH1), found in Sus scrofa (Pig).